The primary structure comprises 413 residues: MTPSISWGLLLLAGLCCMVPSFLAEDVQETDTSQKDQSPASHEIATNLGDFAISLYRELVHQSNTSNIFFSPVSIATAFAMLSLGSKGDTHTQILEGLQFNLTQTSEADIHKSFQHLLQTLNRPDSELQLSTGNGLFVNNDLKLVEKFLEEAKNHYQAEVFSVNFAESEEAKKVINDFVEKGTQGKIVEAVKELDQDTVFALANYILFKGKWKKPFDPENTEEAEFHVDKSTTVKVPMMMLSGMLDVHHCSILSSWVLLMDYAGNASAVFLLPEDGKMQHLEQTLNKELISKILLNRRRRLVQIHIPRLSISGDYNLKTLMSPLGITRIFNNGADLSGITEENAPLKLSKAVHKAVLTIDETGTEAAAATVFEAVPMSMPPILRFDHPFLFIIFEEHTQSPIFVGKVVDPTHK.

The first 24 residues, 1 to 24 (MTPSISWGLLLLAGLCCMVPSFLA), serve as a signal peptide directing secretion. 3 N-linked (GlcNAc...) asparagine glycosylation sites follow: asparagine 64, asparagine 101, and asparagine 265. Positions 368-387 (AATVFEAVPMSMPPILRFDH) are RCL.

This sequence belongs to the serpin family.

The protein resides in the secreted. Inhibitor of serine proteases. Its primary target is elastase, but it also has a moderate affinity for plasmin and thrombin. In Mus musculus (Mouse), this protein is Alpha-1-antitrypsin 1-2 (Serpina1b).